The sequence spans 194 residues: ATP-dependent Clp protease proteolytic subunit (194 aa).

Serine 98 serves as the catalytic Nucleophile. Histidine 123 is a catalytic residue.

This sequence belongs to the peptidase S14 family. As to quaternary structure, fourteen ClpP subunits assemble into 2 heptameric rings which stack back to back to give a disk-like structure with a central cavity, resembling the structure of eukaryotic proteasomes.

It is found in the cytoplasm. It catalyses the reaction Hydrolysis of proteins to small peptides in the presence of ATP and magnesium. alpha-casein is the usual test substrate. In the absence of ATP, only oligopeptides shorter than five residues are hydrolyzed (such as succinyl-Leu-Tyr-|-NHMec, and Leu-Tyr-Leu-|-Tyr-Trp, in which cleavage of the -Tyr-|-Leu- and -Tyr-|-Trp bonds also occurs).. Functionally, cleaves peptides in various proteins in a process that requires ATP hydrolysis. Has a chymotrypsin-like activity. Plays a major role in the degradation of misfolded proteins. The protein is ATP-dependent Clp protease proteolytic subunit of Actinobacillus succinogenes (strain ATCC 55618 / DSM 22257 / CCUG 43843 / 130Z).